We begin with the raw amino-acid sequence, 257 residues long: Acetylglutamate kinase (257 aa).

Substrate contacts are provided by residues 43–44, R65, and N157; that span reads GG. Residues 180-185 and 208-210 each bind ATP; these read DVSGIL and IIT.

Belongs to the acetylglutamate kinase family. ArgB subfamily. As to quaternary structure, homodimer.

The protein resides in the cytoplasm. It carries out the reaction N-acetyl-L-glutamate + ATP = N-acetyl-L-glutamyl 5-phosphate + ADP. Its pathway is amino-acid biosynthesis; L-arginine biosynthesis; N(2)-acetyl-L-ornithine from L-glutamate: step 2/4. In terms of biological role, catalyzes the ATP-dependent phosphorylation of N-acetyl-L-glutamate. The chain is Acetylglutamate kinase from Photorhabdus laumondii subsp. laumondii (strain DSM 15139 / CIP 105565 / TT01) (Photorhabdus luminescens subsp. laumondii).